We begin with the raw amino-acid sequence, 577 residues long: Outer spore wall assembly protein SHE10 (577 aa).

The N-terminal stretch at 1–23 (MGKLIKLITTLTVLVSLLQYCCE) is a signal peptide. Coiled-coil stretches lie at residues 379 to 416 (NETR…ENVE) and 513 to 561 (ILRS…EEDV). Residues 525–545 (RERKERERKEREKAAAEEFQR) show a composition bias toward basic and acidic residues. A disordered region spans residues 525 to 577 (RERKERERKEREKAAAEEFQRQQELLRQQEEEDEEDVSYTSTSTITTTTTMTL). Low complexity predominate over residues 562–577 (SYTSTSTITTTTTMTL).

It belongs to the SHE10 family. Component of the mitochondria-localized RNase mitochondrial RNA-processing (RNase MRP) composed of one single RNA encoded by the NME1 gene and at least 31 proteins. Absent in the nucleus-localized RNase MRP (NuMRP).

The protein localises to the mitochondrion. In terms of biological role, involved in spore wall assembly. May be a component of the mitochondrial RNase MRP (MtMRP), a ribonucleoprotein endoribonuclease involved in the cleaving RNA transcripts to generate primers for DNA replication in mitochondria. The chain is Outer spore wall assembly protein SHE10 from Saccharomyces cerevisiae (strain Lalvin EC1118 / Prise de mousse) (Baker's yeast).